We begin with the raw amino-acid sequence, 944 residues long: MSDYKSTLNLPKTGFPMRANLANREPNMLKNWYSNDLYGKIRAAKKGKKTFILHDGPPYANGDIHIGHSVNKILKDIIIKSKTLSDFDAPYIPGWDCHGLPIELKVEQKVGKPGKKISAAEFRKKCREYAARQVDGQRKDFKRLGVLGEWDKPYLTMDFGTEANIVRALAQVIKNDHLHKGSKPVHWCTECGSALAEAEVEYEDKLSPAIDVAFSAVDNEQVLNCFSAVTDNLGEGNVSAVIWTTTPWTLPANRAIALAQKVEYSLVQAGERRLIIATDLVADCLKRYGNEDFSTLAICKGIDLEKQLFNHPFLDLQVPAILADYVTVDAGTGCVHTAPGHGQDDYAVGLRYDLEVANYVADNGVFRDDTEFFAGLHVFKANDRVLEVLAERNALLCSIKLNHSYPHCWRHKTPIIFRATPQWFIAMDQKSLRADALAEIQAVKWIPSWGQQRIEKMVENRPDWCISRQRTWGVPITLFVHKETDELHPNSVEMMELIARKIEIDGIQAWWDLEPETLLGFEAEEYRKVTDTLDVWFDSGTTHASVVAKREEYTLESGEQAAADMYLEGSDQHRGWFQSSLMTSMAINNKAPYKEVLTHGFVVDGNGKKMSKSLGNVMSPQTVMNNLGADILRLWVASTDYTGEMTVSDEILNRSADSYRRIRNTSRFLLANLNGFDPTTDLVPNEEMVALDRWIVAQTLILQNDVIEAYESYSLHAVYQKLTHFCSIELGSFYLDIIKDRQYTAKADSNAHRSCQTALFHIAEALVRLMAPILSFTADEIWARLPGARDEFVFTTVWYDGLFSLSDNEALSSAAWSKLTLVRAEVNKALEIARKENAIGGGLEAEVILYASDEIATLLTTLEDELRFVLITSQAQVKPLADAPQLALKTEVTGLLVSVVKSAAPKCERCWHHREEVGQNKQHPELCGRCVTNIEGQGEIRKFA.

A 'HIGH' region motif is present at residues 58-68 (PYANGDIHIGH). Glu-568 serves as a coordination point for L-isoleucyl-5'-AMP. The 'KMSKS' region motif lies at 609 to 613 (KMSKS). Lys-612 is an ATP binding site. Zn(2+) contacts are provided by Cys-907, Cys-910, Cys-927, and Cys-930.

The protein belongs to the class-I aminoacyl-tRNA synthetase family. IleS type 1 subfamily. As to quaternary structure, monomer. Requires Zn(2+) as cofactor.

The protein localises to the cytoplasm. It carries out the reaction tRNA(Ile) + L-isoleucine + ATP = L-isoleucyl-tRNA(Ile) + AMP + diphosphate. Functionally, catalyzes the attachment of isoleucine to tRNA(Ile). As IleRS can inadvertently accommodate and process structurally similar amino acids such as valine, to avoid such errors it has two additional distinct tRNA(Ile)-dependent editing activities. One activity is designated as 'pretransfer' editing and involves the hydrolysis of activated Val-AMP. The other activity is designated 'posttransfer' editing and involves deacylation of mischarged Val-tRNA(Ile). The chain is Isoleucine--tRNA ligase from Psychromonas ingrahamii (strain DSM 17664 / CCUG 51855 / 37).